Here is a 489-residue protein sequence, read N- to C-terminus: Cytochrome P450 2C70 (489 aa).

The N-terminal stretch at 1–27 (MALFIFLGIWLSCFLFLFLWNQHRGRG) is a signal peptide. C434 is a binding site for heme.

This sequence belongs to the cytochrome P450 family. Heme serves as cofactor. Expressed in liver.

The protein localises to the endoplasmic reticulum membrane. It is found in the microsome membrane. It catalyses the reaction chenodeoxycholate + reduced [NADPH--hemoprotein reductase] + O2 = alpha-muricholate + oxidized [NADPH--hemoprotein reductase] + H2O + H(+). The enzyme catalyses ursodeoxycholate + reduced [NADPH--hemoprotein reductase] + O2 = beta-muricholate + oxidized [NADPH--hemoprotein reductase] + H2O + H(+). In terms of biological role, a cytochrome P450 monooxygenase involved in muricholic acid (MCA) synthesis. Hydroxylates at the 6-beta position two major bile acids, chenodeoxycholic acid (CDCA) and ursodeoxycholic acid (UDCA) to form alpha-MCA and beta-MCA, respectively. May regulate NR1H4/farnesoid X receptor signaling, as taurine-conjugated MCAs are antagonists of NR1H4. Mechanistically, uses molecular oxygen inserting one oxygen atom into a substrate, and reducing the second into a water molecule, with two electrons provided by NADPH via cytochrome P450 reductase (CPR; NADPH-ferrihemoprotein reductase). The polypeptide is Cytochrome P450 2C70 (Mus musculus (Mouse)).